The chain runs to 348 residues: MSDRLTLLRPDDWHIHLRDGAALANTVGDAARTFGRAIVMPNLVPPVRNAAEADAYRQRILAARPAASRFEPLMVLYLTDRTSTEEIRTAKASGFVHAAKLYPAGATTNSDSGVTRIDNIFEALEAMAEVGMPLLVHGEVTRAEVDVFDREKQFIDEHLRRVVERFPTLKVVFEHITTGDAAQFVREAPANVGATITAHHLLYNRNHMLVGGIRPHFYCLPILKRNTHQEALLDAAVSGNPKFFLGTDSAPHARHAKEAACGCAGCYSAYAAIELYAEAFEQRNALDKLEGFASLHGPDFYGLPRNTDRITLVREEWQAPASLPFGDFDVVPLRAGETLRWKLLEAGA.

Residues histidine 14 and histidine 16 each contribute to the Zn(2+) site. Substrate is bound by residues 16–18 (HLR) and asparagine 42. Residues lysine 100, histidine 137, and histidine 175 each coordinate Zn(2+). Lysine 100 carries the post-translational modification N6-carboxylysine. Histidine 137 provides a ligand contact to substrate. Leucine 220 provides a ligand contact to substrate. Aspartate 248 lines the Zn(2+) pocket. Aspartate 248 is an active-site residue. Histidine 252 and alanine 264 together coordinate substrate.

Belongs to the metallo-dependent hydrolases superfamily. DHOase family. Class II DHOase subfamily. Homodimer. Requires Zn(2+) as cofactor.

The enzyme catalyses (S)-dihydroorotate + H2O = N-carbamoyl-L-aspartate + H(+). It functions in the pathway pyrimidine metabolism; UMP biosynthesis via de novo pathway; (S)-dihydroorotate from bicarbonate: step 3/3. Catalyzes the reversible cyclization of carbamoyl aspartate to dihydroorotate. This Pseudomonas aeruginosa (strain ATCC 15692 / DSM 22644 / CIP 104116 / JCM 14847 / LMG 12228 / 1C / PRS 101 / PAO1) protein is Dihydroorotase.